The chain runs to 348 residues: Interferon regulatory factor 2 (348 aa).

A DNA-binding region (IRF tryptophan pentad repeat) is located at residues 5 to 113 (RMRMRPWLEE…NAFRVYRMLP (109 aa)). An N6-acetyllysine mark is found at Lys75 and Lys78. Residues 117–137 (RPSKKGKKTKSEKDDKFKQIK) form a disordered region. Positions 125 to 137 (TKSEKDDKFKQIK) are enriched in basic and acidic residues. Residues Lys137, Lys164, and Lys291 each participate in a glycyl lysine isopeptide (Lys-Gly) (interchain with G-Cter in SUMO) cross-link. The disordered stretch occupies residues 311–348 (LPQVVSTASTSSSRPDRETRASVIKKTSDITQSRVKSC). Polar residues-rich tracts occupy residues 314–323 (VVSTASTSSS) and 339–348 (DITQSRVKSC).

The protein belongs to the IRF family. Interacts with CREBBP in growing cells; the interaction acetylates IRF2 and regulates IRF2-dependent H4 promoter activity.

The protein localises to the nucleus. Its function is as follows. Specifically binds to the upstream regulatory region of type I IFN and IFN-inducible MHC class I genes (the interferon consensus sequence (ICS)) and represses those genes. Also acts as an activator for several genes including H4 and IL7. Constitutively binds to the ISRE promoter to activate IL7. Involved in cell cycle regulation through binding the site II (HiNF-M) promoter region of H4 and activating transcription during cell growth. Antagonizes IRF1 transcriptional activation. This Gallus gallus (Chicken) protein is Interferon regulatory factor 2 (IRF2).